Consider the following 219-residue polypeptide: 2-phospho-L-lactate guanylyltransferase (219 aa).

Belongs to the CofC family. As to quaternary structure, homodimer.

It carries out the reaction (2S)-2-phospholactate + GTP + H(+) = (2S)-lactyl-2-diphospho-5'-guanosine + diphosphate. It participates in cofactor biosynthesis; coenzyme F420 biosynthesis. In terms of biological role, guanylyltransferase that catalyzes the activation of (2S)-2-phospholactate (2-PL) as (2S)-lactyl-2-diphospho-5'-guanosine, via the condensation of 2-PL with GTP. It is involved in the biosynthesis of coenzyme F420, a hydride carrier cofactor. This Methanocaldococcus vulcanius (strain ATCC 700851 / DSM 12094 / M7) (Methanococcus vulcanius) protein is 2-phospho-L-lactate guanylyltransferase.